A 199-amino-acid polypeptide reads, in one-letter code: MFSRNFTTPSIRIYLNSCVSHRSFHNTTVSQSWLSRIRDRFRGTKEDEKKQIADKDMAAMKVVIPPKKRVSKWKDIQLFEKFAEPSLNREDSLKMINEIRKSLQLQTPWSPEARLQAVKLAYQKTGRIVYDAPLQNIHNWDDLYNYYDKIVDYGDTTLHGRLAWKPTPGLMSLPNVVLHVDENGYPLERKKRRLSRSVA.

The protein resides in the mitochondrion. This is an uncharacterized protein from Schizosaccharomyces pombe (strain 972 / ATCC 24843) (Fission yeast).